Consider the following 283-residue polypeptide: Formamidopyrimidine-DNA glycosylase (283 aa).

Pro2 acts as the Schiff-base intermediate with DNA in catalysis. The active-site Proton donor is the Glu3. Catalysis depends on Lys61, which acts as the Proton donor; for beta-elimination activity. DNA is bound by residues His94, Arg113, and Lys159. The FPG-type zinc finger occupies 245-279; that stretch reads DAYGREGESCRRCGAVMRREKFMNRSSFYCPKCQP. Residue Arg269 is the Proton donor; for delta-elimination activity of the active site.

This sequence belongs to the FPG family. Monomer. It depends on Zn(2+) as a cofactor.

It catalyses the reaction Hydrolysis of DNA containing ring-opened 7-methylguanine residues, releasing 2,6-diamino-4-hydroxy-5-(N-methyl)formamidopyrimidine.. The catalysed reaction is 2'-deoxyribonucleotide-(2'-deoxyribose 5'-phosphate)-2'-deoxyribonucleotide-DNA = a 3'-end 2'-deoxyribonucleotide-(2,3-dehydro-2,3-deoxyribose 5'-phosphate)-DNA + a 5'-end 5'-phospho-2'-deoxyribonucleoside-DNA + H(+). Functionally, involved in base excision repair of DNA damaged by oxidation or by mutagenic agents. Acts as a DNA glycosylase that recognizes and removes damaged bases. Has a preference for oxidized purines, such as 7,8-dihydro-8-oxoguanine (8-oxoG). Has AP (apurinic/apyrimidinic) lyase activity and introduces nicks in the DNA strand. Cleaves the DNA backbone by beta-delta elimination to generate a single-strand break at the site of the removed base with both 3'- and 5'-phosphates. This Mycolicibacterium paratuberculosis (strain ATCC BAA-968 / K-10) (Mycobacterium paratuberculosis) protein is Formamidopyrimidine-DNA glycosylase.